The sequence spans 796 residues: Striatin-3 (796 aa).

The residue at position 1 (Met-1) is an N-acetylmethionine. The segment covering 1–13 (MDELAGGGGGGQG) has biased composition (gly residues). Positions 1-60 (MDELAGGGGGGQGMAAPPRPQQGPGGNLSLPPGANGAPGGGGPPAAEAAGPPAGPELSRP) are disordered. The caveolin-binding stretch occupies residues 71 to 79 (YIQHEWARF). The stretch at 77–136 (ARFEMERAHWEVERAELQARIAFLQGERKGQENLKKDLVRRIKMLEYALKQERAKYHKLK) forms a coiled coil. Thr-150 carries the phosphothreonine modification. The tract at residues 166-183 (QNSQLTWKQGRQLLRQYL) is calmodulin-binding. A phosphoserine mark is found at Ser-202, Ser-214, Ser-229, Ser-257, and Ser-334. Disordered stretches follow at residues 252-271 (ENADDSDEEENDMIEGIPEG) and 311-335 (EDGEGAGEARSSGDGTEWDKDDLSP). Positions 253-264 (NADDSDEEENDM) are enriched in acidic residues. WD repeat units lie at residues 477 to 516 (SHFDGVRALAFHPVEPVLVTASEDHTLKLWNLQKTVPAKK), 530 to 569 (AHIGPVLSLAISSNGEQCFSGGIDATIQWWNMPSPNVDPY), 583 to 622 (AHTDAVWGLAYSGIKNQLLSCSADGTIRLWNPQEKLPCVC), 678 to 717 (QSSNHINRVVSHPTLPVTITAHEDRHIKFFDNKTGKMIHS), 720 to 759 (AHLDAVTSLAVDPNGIYLMSGSHDCSIRLWNLDSKTCVQE), and 766 to 795 (KLDESIYDVAFHPSKAYIASAGADALAKVF).

It belongs to the WD repeat striatin family. Tetramerizes. Part of the core of STRIPAK complexes composed of PP2A catalytic and scaffolding subunits, the striatins (PP2A regulatory subunits), the striatin-associated proteins MOB4, STRIP1 and STRIP2, PDCD10 and members of the STE20 kinases, such as STK24 and STK26. The STRIPAK complex can be extended by adapter proteins such as SLMAP:SIKE1 or CTTNBP2NL. Interacts with CDC42BPB. As to expression, mainly expressed in the brain and muscles but is also detected at low levels in various tissues such as kidney, spleen and lung.

It localises to the cytoplasm. Its subcellular location is the membrane. Functionally, calmodulin-binding scaffolding protein which is the center of the striatin-interacting phosphatase and kinase (STRIPAK) complexes. STRIPAK complexes have critical roles in protein (de)phosphorylation and are regulators of multiple signaling pathways including Hippo, MAPK, nuclear receptor and cytoskeleton remodeling. Different types of STRIPAK complexes are involved in a variety of biological processes such as cell growth, differentiation, apoptosis, metabolism and immune regulation. The chain is Striatin-3 (Strn3) from Mus musculus (Mouse).